Consider the following 145-residue polypeptide: Hemoglobin subunit beta-1 (145 aa).

The region spanning T1 to H145 is the Globin domain. Positions 62 and 91 each coordinate heme b.

It belongs to the globin family. Major hemoglobin is a tetramer of two alpha-1 chains and two beta-1 chains. As to expression, red blood cells.

Its function is as follows. Involved in oxygen transport from the lung to the various peripheral tissues. This is Hemoglobin subunit beta-1 (HBB1) from Triturus cristatus (Great crested newt).